A 278-amino-acid polypeptide reads, in one-letter code: MQAVAPQPGDFPLPLRSLLDAGVHFGHQTKRWNPKMRPFIYGARNGIHIIDLDQTTRLFKRAYDFLTDAVGRGGHVLFVGTKRQAQDIVQEEARRAGMYFVTNRWLGGTLTNFRTIKQGLDRLRTLERMKEDGTYEQLLKKEVVRLEKERERLEKYLGGLKGMGGLPAAIFVIDPHQESIAISEARKLNVPVVAITDTNCDPDLVDFVIPGNDDAIRSIRLITARVADACVEGAQRRKDHGEGGQQAAGGGRGQRDEINVYQGGRGGRGGGPRQQQAS.

The segment at 235–278 (QRRKDHGEGGQQAAGGGRGQRDEINVYQGGRGGRGGGPRQQQAS) is disordered. Composition is skewed to gly residues over residues 243-252 (GGQQAAGGGR) and 263-272 (GGRGGRGGGP).

The protein belongs to the universal ribosomal protein uS2 family.

The polypeptide is Small ribosomal subunit protein uS2 (Sorangium cellulosum (strain So ce56) (Polyangium cellulosum (strain So ce56))).